The primary structure comprises 704 residues: Glycine--tRNA ligase beta subunit (704 aa).

Belongs to the class-II aminoacyl-tRNA synthetase family. Tetramer of two alpha and two beta subunits.

It is found in the cytoplasm. It catalyses the reaction tRNA(Gly) + glycine + ATP = glycyl-tRNA(Gly) + AMP + diphosphate. This is Glycine--tRNA ligase beta subunit from Rhizobium johnstonii (strain DSM 114642 / LMG 32736 / 3841) (Rhizobium leguminosarum bv. viciae).